Consider the following 109-residue polypeptide: MNLTPKERERLTIFMAAELARRRKERGVKLNHPETVAYISDWACERAREGMSVAEIRQEATALLTREDVMDGVPELVDMVQVEPMFPDGTKLVTIHDPIRADTREQLEE.

This sequence belongs to the urease gamma subunit family. As to quaternary structure, heterotrimer of UreA (gamma), UreB (beta) and UreC (alpha) subunits. Three heterotrimers associate to form the active enzyme.

The protein localises to the cytoplasm. The catalysed reaction is urea + 2 H2O + H(+) = hydrogencarbonate + 2 NH4(+). It participates in nitrogen metabolism; urea degradation; CO(2) and NH(3) from urea (urease route): step 1/1. The sequence is that of Urease subunit gamma from Natronomonas pharaonis (strain ATCC 35678 / DSM 2160 / CIP 103997 / JCM 8858 / NBRC 14720 / NCIMB 2260 / Gabara) (Halobacterium pharaonis).